Here is a 352-residue protein sequence, read N- to C-terminus: Ribosomal RNA large subunit methyltransferase M (352 aa).

Residues Ser-187, 218 to 221, Asp-237, Asp-257, and Asp-273 each bind S-adenosyl-L-methionine; that span reads APGG. Residue Lys-302 is the Proton acceptor of the active site.

This sequence belongs to the class I-like SAM-binding methyltransferase superfamily. RNA methyltransferase RlmE family. RlmM subfamily. Monomer.

Its subcellular location is the cytoplasm. It carries out the reaction cytidine(2498) in 23S rRNA + S-adenosyl-L-methionine = 2'-O-methylcytidine(2498) in 23S rRNA + S-adenosyl-L-homocysteine + H(+). In terms of biological role, catalyzes the 2'-O-methylation at nucleotide C2498 in 23S rRNA. In Methylococcus capsulatus (strain ATCC 33009 / NCIMB 11132 / Bath), this protein is Ribosomal RNA large subunit methyltransferase M.